The chain runs to 1381 residues: Hepatocyte growth factor receptor (1381 aa).

Positions methionine 1–glycine 24 are cleaved as a signal peptide. Residues glutamate 25–leucine 934 lie on the Extracellular side of the membrane. Residues lysine 27–leucine 515 enclose the Sema domain. Asparagine 45 carries an N-linked (GlcNAc...) asparagine glycan. Intrachain disulfides connect cysteine 95-cysteine 101, cysteine 98-cysteine 160, cysteine 133-cysteine 141, and cysteine 172-cysteine 175. An N-linked (GlcNAc...) asparagine glycan is attached at asparagine 106. Asparagine 149 carries an N-linked (GlcNAc...) asparagine glycan. The N-linked (GlcNAc...) asparagine glycan is linked to asparagine 202. 2 cysteine pairs are disulfide-bonded: cysteine 298–cysteine 363 and cysteine 385–cysteine 397. An N-linked (GlcNAc...) asparagine glycan is attached at asparagine 399. 4 disulfide bridges follow: cysteine 520–cysteine 538, cysteine 526–cysteine 561, cysteine 529–cysteine 545, and cysteine 541–cysteine 551. IPT/TIG domains lie at proline 563 to valine 655, proline 657 to leucine 739, and proline 742 to valine 836. Residue threonine 582 is glycosylated (O-linked (Man) threonine). N-linked (GlcNAc...) asparagine glycosylation is found at asparagine 607 and asparagine 635. 2 O-linked (Man) threonine glycosylation sites follow: threonine 676 and threonine 761. Asparagine 785, asparagine 879, and asparagine 930 each carry an N-linked (GlcNAc...) asparagine glycan. A helical membrane pass occupies residues isoleucine 935 to leucine 955. At lysine 956 to threonine 1381 the chain is on the cytoplasmic side. Serine 966 is subject to Phosphoserine. Threonine 977 is modified (phosphothreonine). Phosphoserine occurs at positions 990, 997, and 1000. The residue at position 1003 (tyrosine 1003) is a Phosphotyrosine. Positions valine 1078–isoleucine 1345 constitute a Protein kinase domain. ATP contacts are provided by residues isoleucine 1084–valine 1092 and lysine 1110. Aspartate 1204 acts as the Proton acceptor in catalysis. Residues leucine 1212–threonine 1381 form an interaction with RANBP9 region. Residue tyrosine 1230 is modified to Phosphotyrosine. A phosphotyrosine; by autocatalysis mark is found at tyrosine 1234 and tyrosine 1235. Threonine 1289 is modified (phosphothreonine). Residues tryptophan 1320–valine 1359 are interaction with MUC20. A phosphotyrosine; by autocatalysis mark is found at tyrosine 1349 and tyrosine 1356. Tyrosine 1365 bears the Phosphotyrosine mark.

This sequence belongs to the protein kinase superfamily. Tyr protein kinase family. Heterodimer made of an alpha chain (50 kDa) and a beta chain (145 kDa) which are disulfide linked. Binds PLXNB1. Interacts when phosphorylated with downstream effectors including STAT3, PIK3R1, SRC, PCLG1, GRB2 and GAB1. Interacts with SPSB1, SPSB2 and SPSB4. Interacts with INPP5D/SHIP1. When phosphorylated at Tyr-1356, interacts with INPPL1/SHIP2. Interacts with RANBP9 and RANBP10, as well as SPSB1, SPSB2, SPSB3 and SPSB4. SPSB1 binding occurs in the presence and in the absence of HGF, however HGF treatment has a positive effect on this interaction. Interacts with MUC20; prevents interaction with GRB2 and suppresses hepatocyte growth factor-induced cell proliferation. Interacts with GRB10. Interacts with PTPN1 and PTPN2. Interacts with HSP90AA1 and HSP90AB1; the interaction suppresses MET kinase activity. Interacts with tensin TNS3. Interacts (when phosphorylated) with tensin TNS4 (via SH2 domain); the interaction increases MET protein stability by inhibiting MET endocytosis and subsequent lysosomal degradation. In terms of processing, autophosphorylated in response to ligand binding on Tyr-1234 and Tyr-1235 in the kinase domain leading to further phosphorylation of Tyr-1349 and Tyr-1356 in the C-terminal multifunctional docking site. Dephosphorylated by PTPRJ at Tyr-1349 and Tyr-1365. Dephosphorylated by PTPN1 and PTPN2. Ubiquitinated. Ubiquitination by CBL regulates the receptor stability and activity through proteasomal degradation. Post-translationally, O-mannosylation of IPT/TIG domains by TMEM260 is required for protein maturation. O-mannosylated residues are composed of single mannose glycans that are not elongated or modified.

The protein resides in the membrane. The enzyme catalyses L-tyrosyl-[protein] + ATP = O-phospho-L-tyrosyl-[protein] + ADP + H(+). With respect to regulation, in its inactive state, the C-terminal tail interacts with the catalytic domain and inhibits the kinase activity. Upon ligand binding, the C-terminal tail is displaced and becomes phosphorylated, thus increasing the kinase activity. Receptor tyrosine kinase that transduces signals from the extracellular matrix into the cytoplasm by binding to hepatocyte growth factor/HGF ligand. Regulates many physiological processes including proliferation, scattering, morphogenesis and survival. Ligand binding at the cell surface induces autophosphorylation of MET on its intracellular domain that provides docking sites for downstream signaling molecules. Following activation by ligand, interacts with the PI3-kinase subunit PIK3R1, PLCG1, SRC, GRB2, STAT3 or the adapter GAB1. Recruitment of these downstream effectors by MET leads to the activation of several signaling cascades including the RAS-ERK, PI3 kinase-AKT, or PLCgamma-PKC. The RAS-ERK activation is associated with the morphogenetic effects while PI3K/AKT coordinates prosurvival effects. During embryonic development, MET signaling plays a role in gastrulation, development and migration of muscles and neuronal precursors, angiogenesis and kidney formation. In adults, participates in wound healing as well as organ regeneration and tissue remodeling. Also promotes differentiation and proliferation of hematopoietic cells. The polypeptide is Hepatocyte growth factor receptor (MET) (Plecturocebus moloch (Dusky titi monkey)).